The chain runs to 171 residues: MLP-like protein 31 (171 aa).

The protein belongs to the MLP family.

In Arabidopsis thaliana (Mouse-ear cress), this protein is MLP-like protein 31 (MLP31).